The chain runs to 95 residues: Osteocalcin-related protein (95 aa).

An N-terminal signal peptide occupies residues 1-23 (MRTLSLLTLLALAALCLSDLTDA). A propeptide spanning residues 24 to 49 (TPTGPESDKAFMSKQEGNKVVNRLRR) is cleaved from the precursor. One can recognise a Gla domain in the interval 46-92 (RLRRYLGASVPSPDPLEPTRELCELDPACDELSNQYGLKTAYRRIYG). Glutamate 62, glutamate 66, glutamate 69, and aspartate 75 together coordinate Ca(2+). 4-carboxyglutamate occurs at positions 66 and 69. A disulfide bond links cysteine 68 and cysteine 74.

Belongs to the osteocalcin/matrix Gla protein family. Gamma-carboxyglutamic acid residues are formed by vitamin K dependent carboxylation. These residues are essential for the binding of calcium. In terms of tissue distribution, expressed in kidney and lung, but not in bone.

It localises to the secreted. Functionally, binds strongly to apatite and calcium. The sequence is that of Osteocalcin-related protein from Mus musculus (Mouse).